The sequence spans 84 residues: Anaphase-promoting complex subunit 11 (84 aa).

Zn(2+) is bound by residues Cys-23, Cys-26, Cys-34, Cys-37, Cys-44, Cys-51, His-53, His-56, His-58, Cys-59, Cys-73, and Cys-76. An RING-type zinc finger spans residues 34–77; the sequence is CPDCKVPGDDCPLVWGQCSHCFHMHCILKWLHAQQVQQHCPMCR.

It belongs to the RING-box family. In terms of assembly, the mammalian APC/C is composed at least of 14 distinct subunits ANAPC1, ANAPC2, CDC27/APC3, ANAPC4, ANAPC5, CDC16/APC6, ANAPC7, CDC23/APC8, ANAPC10, ANAPC11, CDC26/APC12, ANAPC13, ANAPC15 and ANAPC16 that assemble into a complex of at least 19 chains with a combined molecular mass of around 1.2 MDa; APC/C interacts with FZR1 and FBXO5. Interacts with the cullin domain of ANAPC2. Interacts with UBE2D2. Auto-ubiquitinated. In terms of tissue distribution, expressed at high levels in skeletal muscle and heart; in moderate levels in brain, kidney, and liver; and at low levels in colon, thymus, spleen, small intestine, placenta, lung and peripheral blood leukocyte.

It is found in the cytoplasm. It localises to the nucleus. The protein operates within protein modification; protein ubiquitination. Its function is as follows. Together with the cullin protein ANAPC2, constitutes the catalytic component of the anaphase promoting complex/cyclosome (APC/C), a cell cycle-regulated E3 ubiquitin ligase that controls progression through mitosis and the G1 phase of the cell cycle. The APC/C complex acts by mediating ubiquitination and subsequent degradation of target proteins: it mainly mediates the formation of 'Lys-11'-linked polyubiquitin chains and, to a lower extent, the formation of 'Lys-48'- and 'Lys-63'-linked polyubiquitin chains. The APC/C complex catalyzes assembly of branched 'Lys-11'-/'Lys-48'-linked branched ubiquitin chains on target proteins. May recruit the E2 ubiquitin-conjugating enzymes to the complex. The sequence is that of Anaphase-promoting complex subunit 11 (ANAPC11) from Homo sapiens (Human).